The sequence spans 701 residues: C6 finger domain transcription factor nscR (701 aa).

The segment at residues 17 to 43 is a DNA-binding region (zn(2)-C6 fungal-type); sequence CELCRERKVKCDKLDPCTNCASAGVVC.

Its subcellular location is the nucleus. Its function is as follows. Transcription factor that specifically regulates the neosartoricin B biosynthesis gene cluster. This Arthroderma gypseum (strain ATCC MYA-4604 / CBS 118893) (Microsporum gypseum) protein is C6 finger domain transcription factor nscR.